A 368-amino-acid chain; its full sequence is N-acetylneuraminate epimerase (368 aa).

A signal peptide spans Met-1–Ala-19. Kelch repeat units lie at residues Thr-40–Asp-84, Asn-86–Asn-137, Lys-139–Ala-173, His-174–Gly-219, Thr-222–Gly-265, Glu-287–Asn-336, and Leu-338–Gln-367. Glu-228 (proton acceptor) is an active-site residue.

This sequence belongs to the NanM family. Homodimer.

It localises to the periplasm. The catalysed reaction is N-acetyl-alpha-neuraminate = N-acetyl-beta-neuraminate. In terms of biological role, converts alpha-N-acetylneuranimic acid (Neu5Ac) to the beta-anomer, accelerating the equilibrium between the alpha- and beta-anomers. Probably facilitates sialidase-negative bacteria to compete successfully for limited amounts of extracellular Neu5Ac, which is likely taken up in the beta-anomer. In addition, the rapid removal of sialic acid from solution might be advantageous to the bacterium to damp down host responses. This Escherichia coli O9:H4 (strain HS) protein is N-acetylneuraminate epimerase.